The primary structure comprises 355 residues: Elongation factor Ts (355 aa).

Residues 82-85 (TDFV) are involved in Mg(2+) ion dislocation from EF-Tu.

The protein belongs to the EF-Ts family.

Its subcellular location is the cytoplasm. Associates with the EF-Tu.GDP complex and induces the exchange of GDP to GTP. It remains bound to the aminoacyl-tRNA.EF-Tu.GTP complex up to the GTP hydrolysis stage on the ribosome. The sequence is that of Elongation factor Ts from Helicobacter pylori (strain HPAG1).